The primary structure comprises 187 residues: Elongation factor P (187 aa).

The protein belongs to the elongation factor P family.

The protein localises to the cytoplasm. It participates in protein biosynthesis; polypeptide chain elongation. In terms of biological role, involved in peptide bond synthesis. Stimulates efficient translation and peptide-bond synthesis on native or reconstituted 70S ribosomes in vitro. Probably functions indirectly by altering the affinity of the ribosome for aminoacyl-tRNA, thus increasing their reactivity as acceptors for peptidyl transferase. This chain is Elongation factor P, found in Rhodospirillum rubrum (strain ATCC 11170 / ATH 1.1.1 / DSM 467 / LMG 4362 / NCIMB 8255 / S1).